The following is a 334-amino-acid chain: D-fructose 1,6-bisphosphatase class 2/sedoheptulose 1,7-bisphosphatase (334 aa).

Positions 33, 57, 85, and 88 each coordinate Mn(2+). Residues Glu88–Thr90, Tyr119, Arg164–Arg166, and Asp186–Asp188 contribute to the substrate site. Glu213 contacts Mn(2+).

It belongs to the FBPase class 2 family. Homotetramer. Mn(2+) serves as cofactor.

The catalysed reaction is beta-D-fructose 1,6-bisphosphate + H2O = beta-D-fructose 6-phosphate + phosphate. It carries out the reaction D-sedoheptulose 1,7-bisphosphate + H2O = D-sedoheptulose 7-phosphate + phosphate. The protein operates within carbohydrate biosynthesis; Calvin cycle. Its function is as follows. Catalyzes the hydrolysis of fructose 1,6-bisphosphate (Fru 1,6-P2) and sedoheptulose 1,7-bisphosphate (Sed 1,7-P2) to fructose 6-phosphate and sedoheptulose 7-phosphate, respectively. This chain is D-fructose 1,6-bisphosphatase class 2/sedoheptulose 1,7-bisphosphatase, found in Parasynechococcus marenigrum (strain WH8102).